The primary structure comprises 109 residues: Putative double-stranded DNA mimic protein CKO_01325 (109 aa).

Belongs to the putative dsDNA mimic protein family.

In terms of biological role, may act as a double-stranded DNA (dsDNA) mimic. Probably regulates the activity of a dsDNA-binding protein. The protein is Putative double-stranded DNA mimic protein CKO_01325 of Citrobacter koseri (strain ATCC BAA-895 / CDC 4225-83 / SGSC4696).